The chain runs to 1987 residues: Transcription factor 20 (1987 aa).

The segment covering 1–22 has biased composition (polar residues); the sequence is MQSFREQSSYHGNQQSYPQEVH. 5 disordered regions span residues 1–79, 96–432, 446–481, 502–816, and 844–891; these read MQSF…QGYQ, DTVA…GNVP, LSPT…DPGL, LLSD…GTAR, and PHWG…SLSE. Residues 51-74 show a composition bias toward low complexity; that stretch reads TGSSSSGRRGTAAAAAAMASETSG. Arg-59 carries the post-translational modification Omega-N-methylarginine. Positions 121-142 are enriched in polar residues; the sequence is QGSSFGNQYASEGHVSQFQAQH. Over residues 163 to 205 the composition is skewed to low complexity; that stretch reads SAQYQQQASSQQQQQQQQQQQQQQQQQQQQVQQLRQQLYQSHQ. The segment covering 206-235 has biased composition (polar residues); sequence PLPQTTGQPASGSSHLQPMQRPSTLPSSAG. Residues 248–277 show a composition bias toward low complexity; that stretch reads QSSASSSSSSSFPSPQRFSQSGQSYDGSYS. Over residues 289 to 311 the composition is skewed to polar residues; the sequence is VGSNAQAYGTQSNYSYQPQSMKN. A Glycyl lysine isopeptide (Lys-Gly) (interchain with G-Cter in SUMO2) cross-link involves residue Lys-316. Positions 322–354 are enriched in low complexity; it reads QQGQQQQQQQPQPQQQQPQQQQQQQQQQQHPPQ. Polar residues predominate over residues 357 to 377; sequence MQYTNAATKMPLQSQVGQYNQ. Low complexity predominate over residues 396-416; sequence SNPSPAASVVQSPSCSSTPSP. Positions 417-432 are enriched in polar residues; sequence LMQSGENLQCGQGNVP. Over residues 446–456 the composition is skewed to low complexity; it reads LSPTPSMMPSP. A phosphoserine mark is found at Ser-447 and Ser-458. Polar residues-rich tracts occupy residues 526-537, 566-576, and 585-605; these read SCTNSEGSSQPE, LSGQSTSSDTT, and AGSS…TSPA. A phosphoserine mark is found at Ser-567, Ser-588, Ser-603, and Ser-612. A compositionally biased stretch (polar residues) spans 618 to 627; it reads TSLSSEGNTK. Lys-631 carries the post-translational modification N6-acetyllysine. Residues 645 to 657 are compositionally biased toward basic and acidic residues; that stretch reads RVEKSGGQDKGSQ. Residues 666–682 are compositionally biased toward polar residues; the sequence is RPPSNSGVKEISHTSLP. Residue Ser-669 is modified to Phosphoserine. The span at 693–715 shows a compositional bias: low complexity; the sequence is GNKNGDNNSSNHNGEGNGPSSHS. Residues 722–731 show a composition bias toward polar residues; sequence TGRTEPSKSP. Residues Lys-739, Lys-762, Lys-777, Lys-852, Lys-861, and Lys-873 each participate in a glycyl lysine isopeptide (Lys-Gly) (interchain with G-Cter in SUMO2) cross-link. Over residues 761-777 the composition is skewed to basic and acidic residues; that stretch reads EKGDFGSHGERKGRNEK. At Ser-900 the chain carries Phosphoserine. Residues Lys-949 and Lys-951 each participate in a glycyl lysine isopeptide (Lys-Gly) (interchain with G-Cter in SUMO2) cross-link. A disordered region spans residues 949 to 1065; sequence KLKSQSGQIK…GDPHHMNPHM (117 aa). Lys-958 participates in a covalent cross-link: Glycyl lysine isopeptide (Lys-Gly) (interchain with G-Cter in SUMO1); alternate. Lys-958 is covalently cross-linked (Glycyl lysine isopeptide (Lys-Gly) (interchain with G-Cter in SUMO2); alternate). The span at 974–989 shows a compositional bias: basic and acidic residues; that stretch reads KSGDHCHPTSIKHETY. Residue Lys-985 forms a Glycyl lysine isopeptide (Lys-Gly) (interchain with G-Cter in SUMO2) linkage. A phosphoserine mark is found at Ser-994 and Ser-1033. Residue Lys-1043 forms a Glycyl lysine isopeptide (Lys-Gly) (interchain with G-Cter in SUMO2) linkage. The residue at position 1052 (Arg-1052) is an Omega-N-methylarginine. Ser-1081 bears the Phosphoserine mark. Glycyl lysine isopeptide (Lys-Gly) (interchain with G-Cter in SUMO2) cross-links involve residues Lys-1114, Lys-1126, Lys-1165, Lys-1201, Lys-1206, Lys-1211, Lys-1238, Lys-1259, Lys-1295, and Lys-1302. The disordered stretch occupies residues 1136–1372; the sequence is VIAAAQHRQE…SPAKTKILPP (237 aa). The span at 1158–1170 shows a compositional bias: basic and acidic residues; sequence DRVRSPLKNDKDG. The segment at 1198 to 1219 is leucine-zipper; the sequence is LPAKSMELKHSSQKLQESCWDL. The short motif at 1282 to 1295 is the Nuclear localization signal element; that stretch reads RRRVRSFISPIPSK. Composition is skewed to basic and acidic residues over residues 1305 to 1321 and 1332 to 1346; these read NADD…EGAD and HSQD…DSSK. Ser-1333 bears the Phosphoserine mark. Lys-1337 participates in a covalent cross-link: Glycyl lysine isopeptide (Lys-Gly) (interchain with G-Cter in SUMO2). The residue at position 1363 (Ser-1363) is a Phosphoserine. A Glycyl lysine isopeptide (Lys-Gly) (interchain with G-Cter in SUMO2) cross-link involves residue Lys-1366. A Phosphoserine modification is found at Ser-1389. The segment at 1415-1434 is disordered; that stretch reads SLKSGPPEGGTVATQEAEME. Glycyl lysine isopeptide (Lys-Gly) (interchain with G-Cter in SUMO2) cross-links involve residues Lys-1417, Lys-1437, Lys-1456, and Lys-1474. The disordered stretch occupies residues 1446–1636; sequence SVTNQESNVE…KQAVPIVEPQ (191 aa). Residues 1463–1479 show a composition bias toward basic and acidic residues; sequence EEWRGSGDDKVKTEAHV. The span at 1481–1501 shows a compositional bias: polar residues; it reads TASTGKEPSGTMTSTASQKPG. Lys-1538 is covalently cross-linked (Glycyl lysine isopeptide (Lys-Gly) (interchain with G-Cter in SUMO2)). Ser-1550 carries the phosphoserine modification. Lys-1552 is covalently cross-linked (Glycyl lysine isopeptide (Lys-Gly) (interchain with G-Cter in SUMO2)). Positions 1565–1579 form a DNA-binding region, a.T hook; the sequence is GKKKGRPIGSVNKQK. The span at 1584–1594 shows a compositional bias: pro residues; that stretch reads QPPPPPQPPQM. Positions 1604–1628 match the Nuclear localization signal motif; the sequence is KPKKQRQRRERRKPGAQPRKRKTKQ. Over residues 1606 to 1627 the composition is skewed to basic residues; it reads KKQRQRRERRKPGAQPRKRKTK. Residue Lys-1641 forms a Glycyl lysine isopeptide (Lys-Gly) (interchain with G-Cter in SUMO2) linkage. Disordered stretches follow at residues 1685–1710 and 1760–1865; these read QTKL…SKVL and TLPK…GPEL. At Ser-1697 the chain carries Phosphoserine. A phosphothreonine mark is found at Thr-1699, Thr-1790, and Thr-1792. Residues 1812 to 1819 carry the Nuclear localization signal motif; sequence RFKRRHRS. Positions 1850 to 1859 are enriched in polar residues; it reads DTKPSVPTTS. The segment at 1856-1892 adopts a C2HC pre-PHD-type; degenerate zinc-finger fold; that stretch reads PTTSEGGPELELQIPELPLDSNEFWVHEGCILWANGI. The PHD-type zinc-finger motif lies at 1912–1960; sequence MKCSHCQEAGATLGCYNKGCSFRYHYPCAIDADCLLHEENFSVRCPKHK. The tract at residues 1966 to 1987 is disordered; the sequence is PLPPLQNKTAKGSLSTEQSERG. Residues 1971-1987 are compositionally biased toward polar residues; it reads QNKTAKGSLSTEQSERG.

As to quaternary structure, homodimer. Interacts with RNF4 and JUN. Binds to the regulatory region of MMP3. As to expression, expressed in brain, lung, liver, kidney and testes.

It localises to the nucleus. Functionally, transcriptional activator that binds to the regulatory region of MMP3 and thereby controls stromelysin expression. It stimulates the activity of various transcriptional activators such as JUN, SP1, PAX6 and ETS1, suggesting a function as a coactivator. The sequence is that of Transcription factor 20 (Tcf20) from Mus musculus (Mouse).